The following is a 284-amino-acid chain: Bifunctional protein FolD (284 aa).

NADP(+) is bound by residues 165–167 and Ser190; that span reads GRS.

It belongs to the tetrahydrofolate dehydrogenase/cyclohydrolase family. As to quaternary structure, homodimer.

The catalysed reaction is (6R)-5,10-methylene-5,6,7,8-tetrahydrofolate + NADP(+) = (6R)-5,10-methenyltetrahydrofolate + NADPH. The enzyme catalyses (6R)-5,10-methenyltetrahydrofolate + H2O = (6R)-10-formyltetrahydrofolate + H(+). The protein operates within one-carbon metabolism; tetrahydrofolate interconversion. Its function is as follows. Catalyzes the oxidation of 5,10-methylenetetrahydrofolate to 5,10-methenyltetrahydrofolate and then the hydrolysis of 5,10-methenyltetrahydrofolate to 10-formyltetrahydrofolate. The protein is Bifunctional protein FolD of Streptococcus uberis (strain ATCC BAA-854 / 0140J).